A 602-amino-acid chain; its full sequence is Transcription factor COE4 (602 aa).

An interaction with DNA region spans residues 64-67 (RKSN). The C5-type zinc finger occupies 152–171 (CRVLLTHEIMCSRCCDRKSC). 2 interaction with DNA regions span residues 198-205 (NCLKNAGN) and 237-240 (NNSK). Residues 256-338 (PCIKAISPGE…CKGCPGRFVY (83 aa)) form the IPT/TIG domain. Disordered regions lie at residues 448 to 476 (PEPGYARSCSSASPRGFAPSPGSQQSGYG) and 558 to 602 (PVLR…LAYS). The span at 560–569 (LRPPSSPPQA) shows a compositional bias: pro residues.

The protein belongs to the COE family. In terms of assembly, forms either a homodimer or a heterodimer with a related family member. Interacts with MAPK3/ERK1. Interacts with STAT5A. Most highly expressed in cytotoxic NK cells, especially CD16(+) NK cells, followed by CD8(+) T-cells.

Its subcellular location is the nucleus. Functionally, transcription factor. Binds to specific sequence motif 5'-CCCNNG[GA]G-3' in regulatory elements of putative target immunoregulatory genes such as NKG7, GZMA, and TBX21. Positively modulates transcription of NKG7. May play a role in regulating FAS/CD95-mediated apoptosis in cytotoxic NK cells and T-cells, probably downstream of interleukin IL2 signaling. In Homo sapiens (Human), this protein is Transcription factor COE4 (EBF4).